We begin with the raw amino-acid sequence, 518 residues long: Protein MGF 505-6R (518 aa).

ANK repeat units lie at residues S54–Y83, E129–V158, S261–G290, I292–N322, and K324–D351.

It belongs to the asfivirus MGF 505 family.

Functionally, plays a role in virus cell tropism, and may be required for efficient virus replication in macrophages. This chain is Protein MGF 505-6R, found in Ornithodoros (relapsing fever ticks).